We begin with the raw amino-acid sequence, 360 residues long: Lactosylceramide 4-alpha-galactosyltransferase (360 aa).

Residues 1 to 30 (MGISRSDLEETMSKPPDCLPRMLRGTPRQR) are Cytoplasmic-facing. A helical; Signal-anchor for type II membrane protein transmembrane segment spans residues 31 to 51 (VFTLFIISFKFTFLVSILIYW). At 52 to 360 (HTVGAPKDQR…TTHRAMTMYL (309 aa)) the chain is on the lumenal side. The short motif at 199 to 201 (DTD) is the DXD motif element. N-linked (GlcNAc...) asparagine glycosylation is found at asparagine 210 and asparagine 316.

The protein belongs to the glycosyltransferase 32 family. Ubiquitous. Highly expressed in kidney, mesenteric lymph node, spleen and brain.

Its subcellular location is the golgi apparatus membrane. The catalysed reaction is a beta-D-Gal-(1-&gt;4)-beta-D-Glc-(1&lt;-&gt;1)-Cer(d18:1(4E)) + UDP-alpha-D-galactose = a globoside Gb3Cer (d18:1(4E)) + UDP + H(+). The enzyme catalyses a beta-D-Gal-(1&lt;-&gt;1')-ceramide + UDP-alpha-D-galactose = alpha-D-Gal-(1-&gt;4)-beta-D-Gal-(1&lt;-&gt;1')-Cer + UDP + H(+). The protein operates within glycolipid biosynthesis. Functionally, catalyzes the transfer of galactose from UDP-alpha-D-galactose to lactosylceramide/beta-D-galactosyl-(1-&gt;4)-beta-D-glucosyl-(1&lt;-&gt;1)-ceramide(d18:1(4E)) to produce globotriaosylceramide/globoside Gb3Cer (d18:1(4E)). Also able to transfer galactose to galactosylceramide/beta-D-Gal-(1&lt;-&gt;1')-Cer. Globoside Gb3Cer is a glycosphingolipid of the globo serie, one of the major types of neutral root structures of glycosphingolipids, that constitute a significant portion of mammalian cell membranes. The protein is Lactosylceramide 4-alpha-galactosyltransferase of Rattus norvegicus (Rat).